Consider the following 307-residue polypeptide: tRNA pseudouridine synthase B (307 aa).

Asp48 acts as the Nucleophile in catalysis.

It belongs to the pseudouridine synthase TruB family. Type 1 subfamily.

It catalyses the reaction uridine(55) in tRNA = pseudouridine(55) in tRNA. In terms of biological role, responsible for synthesis of pseudouridine from uracil-55 in the psi GC loop of transfer RNAs. The chain is tRNA pseudouridine synthase B from Neisseria meningitidis serogroup B (strain ATCC BAA-335 / MC58).